The following is a 1214-amino-acid chain: Receptor-type guanylate cyclase gcy-19 (1214 aa).

An N-terminal signal peptide occupies residues 1-18 (MEHLIFLLIFGGYSPSIA). The Extracellular portion of the chain corresponds to 19–517 (QITSSTTTTT…PQTFVDQYGA (499 aa)). N-linked (GlcNAc...) asparagine glycans are attached at residues N85, N363, N441, and N464. Residues 518-538 (LVFSIGGVLALAMLFLITCFF) traverse the membrane as a helical segment. Residues 539 to 1214 (YVLRQRKLER…FRRQETLALM (676 aa)) are Cytoplasmic-facing. Positions 572-859 (RMSKRSIQSG…KGNLMDHVFN (288 aa)) constitute a Protein kinase domain. The 131-residue stretch at 917-1047 (TVFFSDVVKF…DTVNTASRME (131 aa)) folds into the Guanylate cyclase domain. Residues 1116–1197 (NSSNMAYNPE…EKAREIHNEE (82 aa)) form a disordered region. Acidic residues predominate over residues 1133–1142 (DDEDVDDESS). Over residues 1186–1197 (LEEKAREIHNEE) the composition is skewed to basic and acidic residues.

This sequence belongs to the adenylyl cyclase class-4/guanylyl cyclase family. Expressed asymmetrically in ASE right (ASER) sensory neuron.

It is found in the cell membrane. It carries out the reaction GTP = 3',5'-cyclic GMP + diphosphate. In terms of biological role, guanylate cyclase involved in the production of the second messenger cGMP. The chain is Receptor-type guanylate cyclase gcy-19 from Caenorhabditis briggsae.